The primary structure comprises 93 residues: Protein salt-induced and EIN3/EIL1-dependent 1 (93 aa).

Low complexity predominate over residues 23–36 (SSLLTESSSSSLCS). The disordered stretch occupies residues 23–46 (SSLLTESSSSSLCSEEAEGGGGEA).

Triggered by EIN3. Functionally, involved in ethylene-dependent salt stress responses by reducing reactive oxygen species (ROS) accumulation. The sequence is that of Protein salt-induced and EIN3/EIL1-dependent 1 from Arabidopsis thaliana (Mouse-ear cress).